The primary structure comprises 173 residues: Putative phosphoesterase GWCH70_0799 (173 aa).

Histidine 34 functions as the Proton donor in the catalytic mechanism. Short sequence motifs (HXTX) lie at residues 34–37 and 115–118; these read HLTL and HITI. The active-site Proton acceptor is histidine 115.

This sequence belongs to the 2H phosphoesterase superfamily. YjcG family.

This is Putative phosphoesterase GWCH70_0799 from Geobacillus sp. (strain WCH70).